Reading from the N-terminus, the 466-residue chain is Ribosomal protein uS12 methylthiotransferase RimO (466 aa).

The MTTase N-terminal domain occupies P15–P125. Residues C24, C60, C89, C156, C160, and C163 each coordinate [4Fe-4S] cluster. Residues L142 to R380 enclose the Radical SAM core domain. Residues E382–P450 enclose the TRAM domain.

The protein belongs to the methylthiotransferase family. RimO subfamily. It depends on [4Fe-4S] cluster as a cofactor.

It is found in the cytoplasm. The catalysed reaction is L-aspartate(89)-[ribosomal protein uS12]-hydrogen + (sulfur carrier)-SH + AH2 + 2 S-adenosyl-L-methionine = 3-methylsulfanyl-L-aspartate(89)-[ribosomal protein uS12]-hydrogen + (sulfur carrier)-H + 5'-deoxyadenosine + L-methionine + A + S-adenosyl-L-homocysteine + 2 H(+). Its function is as follows. Catalyzes the methylthiolation of an aspartic acid residue of ribosomal protein uS12. This chain is Ribosomal protein uS12 methylthiotransferase RimO, found in Xanthomonas oryzae pv. oryzae (strain MAFF 311018).